Reading from the N-terminus, the 389-residue chain is PqqA peptide cyclase (389 aa).

One can recognise a Radical SAM core domain in the interval 20 to 235; it reads VGLPLWLLAE…TNEYRARLEA (216 aa). C34, C38, and C41 together coordinate [4Fe-4S] cluster.

This sequence belongs to the radical SAM superfamily. PqqE family. As to quaternary structure, interacts with PqqD. The interaction is necessary for activity of PqqE. [4Fe-4S] cluster serves as cofactor.

It carries out the reaction [PQQ precursor protein] + S-adenosyl-L-methionine = E-Y cross-linked-[PQQ precursor protein] + 5'-deoxyadenosine + L-methionine + H(+). It participates in cofactor biosynthesis; pyrroloquinoline quinone biosynthesis. Its function is as follows. Catalyzes the cross-linking of a glutamate residue and a tyrosine residue in the PqqA protein as part of the biosynthesis of pyrroloquinoline quinone (PQQ). The protein is PqqA peptide cyclase of Pseudomonas fluorescens (strain ATCC BAA-477 / NRRL B-23932 / Pf-5).